The primary structure comprises 100 residues: Large ribosomal subunit protein uL23 (100 aa).

Belongs to the universal ribosomal protein uL23 family. In terms of assembly, part of the 50S ribosomal subunit. Contacts protein L29, and trigger factor when it is bound to the ribosome.

In terms of biological role, one of the early assembly proteins it binds 23S rRNA. One of the proteins that surrounds the polypeptide exit tunnel on the outside of the ribosome. Forms the main docking site for trigger factor binding to the ribosome. This is Large ribosomal subunit protein uL23 from Buchnera aphidicola subsp. Schizaphis graminum (strain Sg).